The sequence spans 366 residues: MTPEHLPTEQYEAQLAEKVVRLQSMMAPFSDLVPEVFRSPVSHYRMRAEFRIWHDGDDLYHIIFDQQTKSRIRVDSFPAASELINQLMTAMIAGVRNNPILRHKLFQIDYLTTLRNQAVVSLLYHKKLDDEWRQQAEALRDALRAQNLNVHLIGRATKTKIALDQDYIDERLPIAGKEMIYRQVENSFTQPNAAMNIQMLEWALDVTKGSKGDLLELYCGNGNFSLALARNFDRVLATEIAKPSVAAAQYNIAANHIDNVQIIRMAAEEFTQAMNGVREFNRLQGIDLKSYQCETIFVDPPRSGLDSETEKMVQAYPRILYISCNPETLCKNLETLSQTHKVERLALFDQFPYTHHMECGVLLTAK.

Residues Gln190, Tyr218, Asn223, Glu239, and Asp299 each coordinate S-adenosyl-L-methionine. The Nucleophile role is filled by Cys324. Glu358 functions as the Proton acceptor in the catalytic mechanism.

Belongs to the class I-like SAM-binding methyltransferase superfamily. RNA M5U methyltransferase family. TrmA subfamily.

It carries out the reaction uridine(54) in tRNA + S-adenosyl-L-methionine = 5-methyluridine(54) in tRNA + S-adenosyl-L-homocysteine + H(+). The enzyme catalyses uridine(341) in tmRNA + S-adenosyl-L-methionine = 5-methyluridine(341) in tmRNA + S-adenosyl-L-homocysteine + H(+). Functionally, dual-specificity methyltransferase that catalyzes the formation of 5-methyluridine at position 54 (m5U54) in all tRNAs, and that of position 341 (m5U341) in tmRNA (transfer-mRNA). This Escherichia coli O6:H1 (strain CFT073 / ATCC 700928 / UPEC) protein is tRNA/tmRNA (uracil-C(5))-methyltransferase.